The primary structure comprises 405 residues: MTDKLAVNRNTFDQVILPVYAPAQFIPVKGKGSRVWDQQGTEYIDFAGGIAVTALGHCHPALVSALHQQGETLWHTSNVFTNEPALRLAQKLIAATFADRVFFANSGAEANEAAFKLARHYAIERHSPYKTKIIAFHNAFHGRTLFTVSVGGQPKYSDGFGPKPADIIHVPFNDLAAVKAVMDDHTCAVVLEPIQGEGGITSATPEFLQGVRALCDQHNALLVFDEVQSGMGRSGKLFSYMHYGVTPDILTTAKALGGGFPISAMLTTEEIASVMTVGTHGTTYGGNPLACAVAEAALDVINTPEVLNGIEQRHGLFVQALQSINSKYDVFSDIRGMGLLIGAELTAKYRGQAREFLAAAAANGLMILNAGPDVLRLAPSLVIELEDIQQGMARLEKAMASVIKG.

Pyridoxal 5'-phosphate-binding positions include 107-108 (GA) and phenylalanine 140. Arginine 143 contributes to the N(2)-acetyl-L-ornithine binding site. 225–228 (DEVQ) serves as a coordination point for pyridoxal 5'-phosphate. Lysine 254 is subject to N6-(pyridoxal phosphate)lysine. Threonine 282 provides a ligand contact to N(2)-acetyl-L-ornithine. Residue threonine 283 coordinates pyridoxal 5'-phosphate.

It belongs to the class-III pyridoxal-phosphate-dependent aminotransferase family. ArgD subfamily. As to quaternary structure, homodimer. The cofactor is pyridoxal 5'-phosphate.

It localises to the cytoplasm. It carries out the reaction N(2)-acetyl-L-ornithine + 2-oxoglutarate = N-acetyl-L-glutamate 5-semialdehyde + L-glutamate. It catalyses the reaction N-succinyl-(2S,6S)-2,6-diaminopimelate + 2-oxoglutarate = (S)-2-succinylamino-6-oxoheptanedioate + L-glutamate. The protein operates within amino-acid biosynthesis; L-arginine biosynthesis; N(2)-acetyl-L-ornithine from L-glutamate: step 4/4. It participates in amino-acid biosynthesis; L-lysine biosynthesis via DAP pathway; LL-2,6-diaminopimelate from (S)-tetrahydrodipicolinate (succinylase route): step 2/3. Involved in both the arginine and lysine biosynthetic pathways. The chain is Acetylornithine/succinyldiaminopimelate aminotransferase from Yersinia pestis.